We begin with the raw amino-acid sequence, 49 residues long: Single-stranded DNA-binding protein (49 aa).

As to quaternary structure, homodimer in the absence of DNA, monomer when binding DNA.

Binds preferentially to single-stranded DNA and therefore, destabilizes double-stranded DNA. It is involved in DNA replication, repair and recombination. Binds ss-DNA as the replication fork advances and stimulates the replisome processivity and accuracy. The sequence is that of Single-stranded DNA-binding protein (32) from Enterobacteria phage RB9 (Bacteriophage RB9).